Consider the following 897-residue polypeptide: 3'-5' exonuclease DinG (897 aa).

The region spanning 8–161 (VVDLETTGNQ…DEDAATTAKL (154 aa)) is the Exonuclease domain. Residues 241-496 (SKAVDQLGLT…KAIDQLEKQR (256 aa)) enclose the Helicase ATP-binding domain. An ATP-binding site is contributed by 276-283 (ASLGSGKS). A DEAH box motif is present at residues 448 to 451 (DEAH). One can recognise a Helicase C-terminal domain in the interval 703-883 (NIDEYVASIV…NYRQKKGDIQ (181 aa)).

The protein belongs to the helicase family. DinG subfamily. Type 2 sub-subfamily.

Its function is as follows. 3'-5' exonuclease. The protein is 3'-5' exonuclease DinG of Staphylococcus aureus (strain bovine RF122 / ET3-1).